The chain runs to 154 residues: 6,7-dimethyl-8-ribityllumazine synthase (154 aa).

5-amino-6-(D-ribitylamino)uracil contacts are provided by residues Trp23, 57–59, and 81–83; these read AFE and AVI. 86-87 contributes to the (2S)-2-hydroxy-3-oxobutyl phosphate binding site; it reads AT. The active-site Proton donor is His89. Phe114 provides a ligand contact to 5-amino-6-(D-ribitylamino)uracil. Arg128 contributes to the (2S)-2-hydroxy-3-oxobutyl phosphate binding site.

Belongs to the DMRL synthase family.

The enzyme catalyses (2S)-2-hydroxy-3-oxobutyl phosphate + 5-amino-6-(D-ribitylamino)uracil = 6,7-dimethyl-8-(1-D-ribityl)lumazine + phosphate + 2 H2O + H(+). It functions in the pathway cofactor biosynthesis; riboflavin biosynthesis; riboflavin from 2-hydroxy-3-oxobutyl phosphate and 5-amino-6-(D-ribitylamino)uracil: step 1/2. Functionally, catalyzes the formation of 6,7-dimethyl-8-ribityllumazine by condensation of 5-amino-6-(D-ribitylamino)uracil with 3,4-dihydroxy-2-butanone 4-phosphate. This is the penultimate step in the biosynthesis of riboflavin. The polypeptide is 6,7-dimethyl-8-ribityllumazine synthase (Sulfurimonas denitrificans (strain ATCC 33889 / DSM 1251) (Thiomicrospira denitrificans (strain ATCC 33889 / DSM 1251))).